Reading from the N-terminus, the 472-residue chain is Homeobox protein PKNOX2 (472 aa).

A disordered region spans residues 1-62 (MMQHASPAPA…STPVPSAPID (62 aa)). A compositionally biased stretch (polar residues) spans 26–38 (DSPQMTATTQPPS). Residues 46 to 56 (SAPSAAASTPV) are compositionally biased toward low complexity. The MEIS N-terminal domain occupies 96–179 (GSECITSASF…MHSDNLLRND (84 aa)). The homeobox DNA-binding region spans 291–350 (KRGVLPKHATNIMRSWLFQHLMHPYPTEDEKRQIAAQTNLTLLQVNNWFVNARRRILQPM). 3 disordered regions span residues 351–371 (LDASNPDPAPKAKKIKSQHRP), 386–405 (QQQGGAPGTNPDGSINLDNL), and 423–472 (AAHD…DSLV). A compositionally biased stretch (basic residues) spans 361–371 (KAKKIKSQHRP). Residues 396 to 405 (PDGSINLDNL) show a composition bias toward polar residues. Residues 429–454 (LDGTEEEDEDEMEEEEEEELEEEVDE) show a composition bias toward acidic residues.

This sequence belongs to the TALE/MEIS homeobox family.

It is found in the nucleus. The protein is Homeobox protein PKNOX2 (PKNOX2) of Pongo abelii (Sumatran orangutan).